Reading from the N-terminus, the 517-residue chain is L-amino-acid oxidase (517 aa).

The first 18 residues, 1–18, serve as a signal peptide directing secretion; it reads MNVFFMFSLLFLAALESC. Cysteines 29 and 192 form a disulfide. FAD contacts are provided by residues 62–63, 82–83, R90, and 106–109; these read MA, EA, and GPMR. R109 contacts substrate. N191 is a glycosylation site (N-linked (GlcNAc...) asparagine). V280 serves as a coordination point for FAD. The cysteines at positions 350 and 431 are disulfide-linked. N-linked (GlcNAc...) asparagine glycosylation occurs at N380. Y391 is a substrate binding site. Residues E476 and 483-488 each bind FAD; that span reads GWLDST. 483–484 contributes to the substrate binding site; it reads GW.

The protein belongs to the flavin monoamine oxidase family. FIG1 subfamily. In terms of assembly, homodimer; non-covalently linked. FAD serves as cofactor. N-glycosylated. Expressed by the venom gland.

The protein resides in the secreted. It carries out the reaction an L-alpha-amino acid + O2 + H2O = a 2-oxocarboxylate + H2O2 + NH4(+). Its function is as follows. Catalyzes an oxidative deamination of predominantly hydrophobic and aromatic L-amino acids, thus producing hydrogen peroxide that may contribute to the diverse toxic effects of this enzyme. Exhibits diverse biological activities, such as hemorrhage, hemolysis, edema, apoptosis of vascular endothelial cells or tumor cell lines, antibacterial and antiparasitic activities, as well as regulation of platelet aggregation. Effects of snake L-amino oxidases on platelets are controversial, since they either induce aggregation or inhibit agonist-induced aggregation. These different effects are probably due to different experimental conditions. This is L-amino-acid oxidase from Notechis scutatus scutatus (Mainland tiger snake).